The sequence spans 591 residues: NADH-quinone oxidoreductase subunit C/D (591 aa).

The segment at 1-182 (MVTVVENIDP…TPYFLNTAKQ (182 aa)) is NADH dehydrogenase I subunit C. The segment at 206–591 (DFMFLNIGPN…IDVVMADCDR (386 aa)) is NADH dehydrogenase I subunit D.

The protein in the N-terminal section; belongs to the complex I 30 kDa subunit family. In the C-terminal section; belongs to the complex I 49 kDa subunit family. As to quaternary structure, NDH-1 is composed of 13 different subunits. Subunits NuoB, CD, E, F, and G constitute the peripheral sector of the complex.

It is found in the cell inner membrane. It catalyses the reaction a quinone + NADH + 5 H(+)(in) = a quinol + NAD(+) + 4 H(+)(out). NDH-1 shuttles electrons from NADH, via FMN and iron-sulfur (Fe-S) centers, to quinones in the respiratory chain. The immediate electron acceptor for the enzyme in this species is believed to be ubiquinone. Couples the redox reaction to proton translocation (for every two electrons transferred, four hydrogen ions are translocated across the cytoplasmic membrane), and thus conserves the redox energy in a proton gradient. This chain is NADH-quinone oxidoreductase subunit C/D, found in Psychrobacter arcticus (strain DSM 17307 / VKM B-2377 / 273-4).